A 235-amino-acid polypeptide reads, in one-letter code: Thiamine-phosphate synthase (235 aa).

Residues 50–54 (QLRDK) and Asn-91 each bind 4-amino-2-methyl-5-(diphosphooxymethyl)pyrimidine. Positions 92 and 111 each coordinate Mg(2+). Ser-130 contacts 4-amino-2-methyl-5-(diphosphooxymethyl)pyrimidine. 160-162 (TPT) lines the 2-[(2R,5Z)-2-carboxy-4-methylthiazol-5(2H)-ylidene]ethyl phosphate pocket. Lys-163 lines the 4-amino-2-methyl-5-(diphosphooxymethyl)pyrimidine pocket. Gly-191 provides a ligand contact to 2-[(2R,5Z)-2-carboxy-4-methylthiazol-5(2H)-ylidene]ethyl phosphate.

Belongs to the thiamine-phosphate synthase family. It depends on Mg(2+) as a cofactor.

It carries out the reaction 2-[(2R,5Z)-2-carboxy-4-methylthiazol-5(2H)-ylidene]ethyl phosphate + 4-amino-2-methyl-5-(diphosphooxymethyl)pyrimidine + 2 H(+) = thiamine phosphate + CO2 + diphosphate. The catalysed reaction is 2-(2-carboxy-4-methylthiazol-5-yl)ethyl phosphate + 4-amino-2-methyl-5-(diphosphooxymethyl)pyrimidine + 2 H(+) = thiamine phosphate + CO2 + diphosphate. The enzyme catalyses 4-methyl-5-(2-phosphooxyethyl)-thiazole + 4-amino-2-methyl-5-(diphosphooxymethyl)pyrimidine + H(+) = thiamine phosphate + diphosphate. The protein operates within cofactor biosynthesis; thiamine diphosphate biosynthesis; thiamine phosphate from 4-amino-2-methyl-5-diphosphomethylpyrimidine and 4-methyl-5-(2-phosphoethyl)-thiazole: step 1/1. Condenses 4-methyl-5-(beta-hydroxyethyl)thiazole monophosphate (THZ-P) and 2-methyl-4-amino-5-hydroxymethyl pyrimidine pyrophosphate (HMP-PP) to form thiamine monophosphate (TMP). This Mycobacterium leprae (strain TN) protein is Thiamine-phosphate synthase.